The sequence spans 344 residues: MITQRQNDILNLIVELFTQTHEPVGSKALQRTIESSSATIRNDMAKLEKLGLLEKAHTSSGRMPSPAGFKYFVEHSLRLDSIDEQDIYHVIKAFDFEAFKLEDMLQKASHILSEMTGYTSVILDVEPARQRLTGFDVVQLSNHDALAVMTLDESKPVTVQFAIPRNFLTRDLIAFKAIVEERLLDGSVMDIHYKLRTEIPQIVQKYFVTTDNVLQLFDYVFSELFLETVFVAGKVNSLTYSDLSTYQFLDNEQQVAISLRQGLKEGEMASVQVADSQEAALADVSVLTHKFLIPYRGFGLLSLIGPIDMDYRRSVSLVNIIGKVLAAKLGDYYRYLNSNHYEVH.

It belongs to the HrcA family.

Its function is as follows. Negative regulator of class I heat shock genes (grpE-dnaK-dnaJ and groELS operons). Prevents heat-shock induction of these operons. The chain is Heat-inducible transcription repressor HrcA from Streptococcus agalactiae serotype III (strain NEM316).